Here is an 82-residue protein sequence, read N- to C-terminus: Small ribosomal subunit protein uS17 (82 aa).

Belongs to the universal ribosomal protein uS17 family. As to quaternary structure, part of the 30S ribosomal subunit.

Functionally, one of the primary rRNA binding proteins, it binds specifically to the 5'-end of 16S ribosomal RNA. This is Small ribosomal subunit protein uS17 from Synechococcus elongatus (strain ATCC 33912 / PCC 7942 / FACHB-805) (Anacystis nidulans R2).